Reading from the N-terminus, the 506-residue chain is MEFSPRAAELTNLLESRITNFYTNFQVDEIGRVVSVGDGIARVYGLNEIQAGEMVEFASGVKGIALNLENENVGIVVFGSDTAIKEGDLVKRTGSIVDVPAGKAMLGRVVDALGVPIDGRGALSDHERRRVEVKAPGIIERKSVHEPMQTGLKAVDSLVPIGRGQRELIIGDRQTGKTAIAIDTILNQKQLNSKATSESETLYCVYVAVGQKRSTVAQLVQILSEANALEYSILVAATASDPAPLQFLAPYSGCAMGEYFRDNGMHALIIYDDLSKQAVAYRQMSLLLRRPPGREAFPGDVFYLHSRLLERAAKRSDQTGAGSLTALPVIETQAGDVSAYIPTNVISITDGQICLETELFYRGIRPAINVGLSVSRVGSAAQLKAMKQVCGSPKLELAQYREVAAFAQFGSDLDAATQALLNRGARLTEVPKQPQYAPLPIEKQILVIYAAVNGFCDRMPLDKISQYERTIPNSVKPELLQSLKGGLTNEKKMELDSFLKECALNY.

171 to 178 lines the ATP pocket; the sequence is GDRQTGKT.

This sequence belongs to the ATPase alpha/beta chains family. In terms of assembly, F-type ATPases have 2 components, CF(1) - the catalytic core - and CF(0) - the membrane proton channel. CF(1) has five subunits: alpha(3), beta(3), gamma(1), delta(1), epsilon(1). CF(0) has three main subunits: a, b and c.

It is found in the mitochondrion. The protein localises to the mitochondrion inner membrane. Functionally, mitochondrial membrane ATP synthase (F(1)F(0) ATP synthase or Complex V) produces ATP from ADP in the presence of a proton gradient across the membrane which is generated by electron transport complexes of the respiratory chain. F-type ATPases consist of two structural domains, F(1) - containing the extramembraneous catalytic core, and F(0) - containing the membrane proton channel, linked together by a central stalk and a peripheral stalk. During catalysis, ATP synthesis in the catalytic domain of F(1) is coupled via a rotary mechanism of the central stalk subunits to proton translocation. Subunits alpha and beta form the catalytic core in F(1). Rotation of the central stalk against the surrounding alpha(3)beta(3) subunits leads to hydrolysis of ATP in three separate catalytic sites on the beta subunits. Subunit alpha does not bear the catalytic high-affinity ATP-binding sites. The protein is ATP synthase subunit alpha, mitochondrial (ATPA) of Beta vulgaris (Sugar beet).